The primary structure comprises 633 residues: Copine-7 (633 aa).

2 consecutive C2 domains span residues S2–S133 and N212–D339. The Ca(2+) site is built by D245, D251, D307, D309, and D315. Residues H382–V581 form the VWFA domain.

It belongs to the copine family. It depends on Ca(2+) as a cofactor. As to expression, expressed in the brain, testis, thymus and small intestine.

It is found in the cytoplasm. It localises to the nucleus. The protein resides in the cell membrane. Its function is as follows. Calcium-dependent phospholipid-binding protein that may play a role in calcium-mediated intracellular processes. In Homo sapiens (Human), this protein is Copine-7.